An 857-amino-acid chain; its full sequence is KH domain-containing protein HEN4 (857 aa).

The segment covering 1–15 (MERNSVKFHAEKRSG) has biased composition (basic and acidic residues). The tract at residues 1 to 27 (MERNSVKFHAEKRSGAFDPGSGFGSSK) is disordered. 4 consecutive KH domains span residues 46–110 (HAAF…KLGA), 149–217 (TVVC…LVSI), 451–521 (DVVF…IMLI), and 541–610 (SITA…IFHI). A disordered region spans residues 644-755 (SDNPLSIGSH…RGLSDASGGL (112 aa)). Composition is skewed to polar residues over residues 645–665 (DNPL…NSSS) and 673–688 (SFLS…SRSV). The span at 718–730 (FTMDHSDNSHHLT) shows a compositional bias: basic and acidic residues. A compositionally biased stretch (low complexity) spans 746–755 (RGLSDASGGL). Residues 775 to 839 (NTTVEIRVPA…DQTQAAQNLL (65 aa)) form the KH 5 domain.

In terms of assembly, interacts with HUA1. Interacts with FLK and PEP.

Its subcellular location is the nucleus speckle. Functionally, functions in floral reproductive organ identity in the third whorl and floral determinacy specification by specifically promoting the processing of AGAMOUS (AG) pre-mRNA. Functions in association with HUA1 and HUA2. The sequence is that of KH domain-containing protein HEN4 from Arabidopsis thaliana (Mouse-ear cress).